The sequence spans 202 residues: 3-isopropylmalate dehydratase small subunit 1 (202 aa).

It belongs to the LeuD family. LeuD type 1 subfamily. Heterodimer of LeuC and LeuD.

It carries out the reaction (2R,3S)-3-isopropylmalate = (2S)-2-isopropylmalate. Its pathway is amino-acid biosynthesis; L-leucine biosynthesis; L-leucine from 3-methyl-2-oxobutanoate: step 2/4. Functionally, catalyzes the isomerization between 2-isopropylmalate and 3-isopropylmalate, via the formation of 2-isopropylmaleate. The polypeptide is 3-isopropylmalate dehydratase small subunit 1 (Bordetella pertussis (strain Tohama I / ATCC BAA-589 / NCTC 13251)).